Here is a 343-residue protein sequence, read N- to C-terminus: L-threonine 3-dehydrogenase (343 aa).

Cys40 contributes to the Zn(2+) binding site. Residues Thr42 and His45 each act as charge relay system in the active site. 6 residues coordinate Zn(2+): His65, Glu66, Cys95, Cys98, Cys101, and Cys109. NAD(+) contacts are provided by residues Ile177, Asp197, Arg202, 264–266, and 288–289; these read LGI and IY.

The protein belongs to the zinc-containing alcohol dehydrogenase family. As to quaternary structure, homotetramer. Zn(2+) is required as a cofactor.

It is found in the cytoplasm. It carries out the reaction L-threonine + NAD(+) = (2S)-2-amino-3-oxobutanoate + NADH + H(+). The protein operates within amino-acid degradation; L-threonine degradation via oxydo-reductase pathway; glycine from L-threonine: step 1/2. Functionally, catalyzes the NAD(+)-dependent oxidation of L-threonine to 2-amino-3-ketobutyrate. This Aliivibrio fischeri (strain ATCC 700601 / ES114) (Vibrio fischeri) protein is L-threonine 3-dehydrogenase.